Here is a 333-residue protein sequence, read N- to C-terminus: Biotin synthase (333 aa).

Residues 54–287 form the Radical SAM core domain; it reads ANHGAIHACS…TKIIKFAAGR (234 aa). 3 residues coordinate [4Fe-4S] cluster: Cys-72, Cys-76, and Cys-79. Positions 151, 212, and 282 each coordinate [2Fe-2S] cluster.

The protein belongs to the radical SAM superfamily. Biotin synthase family. As to quaternary structure, homodimer. It depends on [4Fe-4S] cluster as a cofactor. The cofactor is [2Fe-2S] cluster.

It catalyses the reaction (4R,5S)-dethiobiotin + (sulfur carrier)-SH + 2 reduced [2Fe-2S]-[ferredoxin] + 2 S-adenosyl-L-methionine = (sulfur carrier)-H + biotin + 2 5'-deoxyadenosine + 2 L-methionine + 2 oxidized [2Fe-2S]-[ferredoxin]. Its pathway is cofactor biosynthesis; biotin biosynthesis; biotin from 7,8-diaminononanoate: step 2/2. Catalyzes the conversion of dethiobiotin (DTB) to biotin by the insertion of a sulfur atom into dethiobiotin via a radical-based mechanism. In Chlorobaculum tepidum (strain ATCC 49652 / DSM 12025 / NBRC 103806 / TLS) (Chlorobium tepidum), this protein is Biotin synthase.